The primary structure comprises 1058 residues: Carbamoyl phosphate synthase large chain (1058 aa).

The interval 1–401 is carboxyphosphate synthetic domain; the sequence is MPKRKDIQKI…SLLKACRSLE (401 aa). ATP is bound by residues arginine 129, arginine 169, glycine 175, glycine 176, arginine 208, isoleucine 210, glutamate 215, glycine 241, isoleucine 242, histidine 243, glutamine 284, and glutamate 298. Positions 133–327 constitute an ATP-grasp 1 domain; that stretch reads KQLMQELDQP…IAKLAAKIAV (195 aa). Positions 284, 298, and 300 each coordinate Mg(2+). Mn(2+) contacts are provided by glutamine 284, glutamate 298, and asparagine 300. The tract at residues 402 to 546 is oligomerization domain; sequence IGVCHNEMTS…YSTYELENES (145 aa). The segment at 547 to 929 is carbamoyl phosphate synthetic domain; sequence VQSNKESILV…ALYKAFEANN (383 aa). Residues 671–861 enclose the ATP-grasp 2 domain; that stretch reads EKALKELGIP…MAQIATKLIL (191 aa). Residues arginine 707, serine 746, isoleucine 748, glutamate 752, glycine 777, valine 778, histidine 779, serine 780, glutamine 820, and glutamate 832 each coordinate ATP. 3 residues coordinate Mg(2+): glutamine 820, glutamate 832, and asparagine 834. Mn(2+)-binding residues include glutamine 820, glutamate 832, and asparagine 834. One can recognise an MGS-like domain in the interval 930–1058; sequence SHLSEFGQIV…ESRCFNIEAI (129 aa). The allosteric domain stretch occupies residues 930–1058; that stretch reads SHLSEFGQIV…ESRCFNIEAI (129 aa).

The protein belongs to the CarB family. In terms of assembly, composed of two chains; the small (or glutamine) chain promotes the hydrolysis of glutamine to ammonia, which is used by the large (or ammonia) chain to synthesize carbamoyl phosphate. Tetramer of heterodimers (alpha,beta)4. Requires Mg(2+) as cofactor. Mn(2+) serves as cofactor.

The enzyme catalyses hydrogencarbonate + L-glutamine + 2 ATP + H2O = carbamoyl phosphate + L-glutamate + 2 ADP + phosphate + 2 H(+). The catalysed reaction is hydrogencarbonate + NH4(+) + 2 ATP = carbamoyl phosphate + 2 ADP + phosphate + 2 H(+). The protein operates within amino-acid biosynthesis; L-arginine biosynthesis; carbamoyl phosphate from bicarbonate: step 1/1. It participates in pyrimidine metabolism; UMP biosynthesis via de novo pathway; (S)-dihydroorotate from bicarbonate: step 1/3. Functionally, large subunit of the glutamine-dependent carbamoyl phosphate synthetase (CPSase). CPSase catalyzes the formation of carbamoyl phosphate from the ammonia moiety of glutamine, carbonate, and phosphate donated by ATP, constituting the first step of 2 biosynthetic pathways, one leading to arginine and/or urea and the other to pyrimidine nucleotides. The large subunit (synthetase) binds the substrates ammonia (free or transferred from glutamine from the small subunit), hydrogencarbonate and ATP and carries out an ATP-coupled ligase reaction, activating hydrogencarbonate by forming carboxy phosphate which reacts with ammonia to form carbamoyl phosphate. The polypeptide is Carbamoyl phosphate synthase large chain (Streptococcus pyogenes serotype M3 (strain ATCC BAA-595 / MGAS315)).